Consider the following 291-residue polypeptide: Foldase protein PrsA 2 (291 aa).

The N-terminal stretch at 1–20 (MKKKLILGLVMMMALFSLAA) is a signal peptide. C21 is lipidated: N-palmitoyl cysteine. C21 is lipidated: S-diacylglycerol cysteine. The 92-residue stretch at 135–226 (QPDITVSHIL…YGYHIIQMDK (92 aa)) folds into the PpiC domain.

Belongs to the PrsA family.

The protein resides in the cell membrane. The enzyme catalyses [protein]-peptidylproline (omega=180) = [protein]-peptidylproline (omega=0). In terms of biological role, plays a major role in protein secretion by helping the post-translocational extracellular folding of several secreted proteins. In Listeria innocua serovar 6a (strain ATCC BAA-680 / CLIP 11262), this protein is Foldase protein PrsA 2 (prsA2).